The following is a 142-amino-acid chain: SLSDKDKAAVKALWSKIGKSADAIGNDALSRMIVVYPQTKTYFSHWPSVTPGHPDIKAHGKKVMGGLAIAVSKINDLKAGLSNLSQQHAYKLRVDPANFKILNHCILVVISTMFPKNFTPQAHVSLNKFLSGVALALAQRYR.

Serine 1 is subject to N-acetylserine. Positions 1–142 constitute a Globin domain; it reads SLSDKDKAAV…VALALAQRYR (142 aa). Histidine 59 provides a ligand contact to O2. Histidine 88 contacts heme b.

Belongs to the globin family. Hb1 is a heterotetramer of two alpha-2 chains and two beta chains. In terms of tissue distribution, red blood cells.

Involved in oxygen transport from gills to the various peripheral tissues. This chain is Hemoglobin subunit alpha-1 (hba1), found in Notothenia neglecta (Yellowbelly rockcod).